The chain runs to 2820 residues: MAAHRPVEWVQAVVSRFDEQLPIKTGQQNTHTKVSTEHNKECLINISKYKFSLVISGLTTILKNVNNMRIFGEAAEKNLYLSQLIILDTLEKCLAGQPKDTMRLDETMLVKQLLPEICHFLHTCREGNQHAAELRNSASGVLFSLSCNNFNAVFSRISTRLQELTVCSEDNVDVHDIELLQYINVDCAKLKRLLKETAFKFKALKKVAQLAVINSLEKAFWNWVENYPDEFTKLYQIPQTDMAECAGKLFDLVDGFAESTKRKAAVWPLQIILLILCPEIIQDISRDVVDENNTNKKLFLDSLRKALAGHGGSRQLTESAAIACVKLCKASTYINWEDNSVIFLLVQSMVVDLKNLLFNPSKPFSRGSQPADVDLMIDCLVSCFRISPHNNQHFKICLAQNSPSTFHYVLVNSLHRIITNSAWDWWPKIDAVYCHSVELRNMFGETLHKAVQGCGAHPALRMAPSLTFKEKVTSLKFKEKPTDLEARSYKYLLLSMVKLIHADPKLLLCNPRKQGPETQGSTAELITGLVQLVPQSHMPEVAQEAMEALLVLHQLDSIDLWNPDAPVETFWEISSQMLFYICKKLTSHQMLSSTEILKWLREILICRNKFLLKNKQADRSSCHSLYLYGVGCDLPASGNVTQMSVDHEESLRTCAPGASLRKGRGNSSMDSTAGCSGTPPICRQAQTKLEVALYMFLWSPDTEVVLVAMSCFRHLCEEADIRCGVDEVSVHNFLPNYNTFMEFASVSNMLSTGRAALQKRVMALLRRIEHPTAGNTEAWEDTHAKWEQATKLILNYPKAKMEDGQAAESLHKTIVKRRMSHVSGGGSIDLSDTDSLQEWINMTGFLCALGGVCLQQRSSSGLATYSPPMGPVSERKGSMISVMSSEGNVDSPVSRFMDRLLSLMVCNHEKVGLQIRTNVKDLVGLELSPALYPMLFNKLKSAISKFFDSQGQVLLTDSNTQFVEQTIAIMKNLLDNHTEGSSEHLGQASIETMMLNLVRYVRVLGNMVHAIQIKTKLCQLVEVMMARRDDLSFCQEMKFRNKMVEYLTDWVMGTSNQAADDDVKCLTRDLDQASMEAVVSLLAGLPLQPEEGDGVELMEAKSQLFLKYFTLFMNLLNDCSEVEDENAQTGGRKRGMSRRLASLRHCTVLAMSNLLNANVDSGLMHSIGLGYHKDLQTRATFMEVLTKILQQGTEFDTLAETVLADRFERLVELVTMMGDQGELPIAMALANVVPCSQWDELARVLVTLFDSRHLLYQLLWNMFSKEVELADSMQTLFRGNSLASKIMTFCFKVYGATYLQKLLDPLLRIIITSSDWQHVSFEVDPTRLEPSESLEENQRNLLQMTEKFFHAIISSSSEFPSQLRSVCHCLYQVVSQRFPQNSIGAVGSAMFLRFINPAIVSPYEAGILDKKPPPRIERGLKLMSKVLQSIANHVLFTKEEHMRPFNDFVKSNFDLARRFFLDIASDCPTSDAVNHSLSFISDGNVLALHRLLWNNQEKIGQYLSSNRDHKAVGRRPFDKMATLLAYLGPPEHKPVADTHWSSLNLTSSKFEEFMTRHQVHEKEEFKALKTLSIFYQAGTSKAGNPIFYYVARRFKTGQINGDLLIYHVLLTLKPYYAKPYEIVVDLTHTGPSNRFKTDFLSKWFVVFPGFAYDNVSAVYIYNCNSWVREYTKYHERLLTGLKGSKRLIFIDCPGKLAEHIEHEQQKLPAATLALEEDLKVFHNALKLAHKDTKVSIKVGSTAVQVTSAERTKVLGQSVFLNDIYYASEIEEICLVDENQFTLTIANQGTPLTFMHQECEAIVQSIIHIRTRWELSQPDSIPQHTKIRPKDVPGTLLNIALLNLGSSDPSLRSAAYNLLCALTCTFNLKIEGQLLETSGLCIPANNTLFIVSISKTLAANEPHLTLEFLEECISGFSKSSIELKHLCLEYMTPWLSNLVRFCKHNDDAKRQRVTAILDKLITMTINEKQMYPSIQAKIWGSLGQITDLLDVVLDSFIKTSATGGLGSIKAEVMADTAVALASGNVKLVSSKVIGRMCKIIDKTCLSPTPTLEQHLMWDDIAILARYMLMLSFNNSLDVAAHLPYLFHVVTFLVATGPLSLRASTHGLVINIIHSLCTCSQLHFSEETKQVLRLSLTEFSLPKFYLLFGISKVKSAAVIAFRSSYRDRSFSPGSYERETFALTSLETVTEALLEIMEACMRDIPTCKWLDQWTELAQRFAFQYNPSLQPRALVVFGCISKRVSHGQIKQIIRILSKALESCLKGPDTYNSQVLIEATVIALTKLQPLLNKDSPLHKALFWVAVAVLQLDEVNLYSAGTALLEQNLHTLDSLRIFNDKSPEEVFMAIRNPLEWHCKQMDHFVGLNFNSNFNFALVGHLLKGYRHPSPAIVARTVRILHTLLTLVNKHRNCDKFEVNTQSVAYLAALLTVSEEVRSRCSLKHRKSLLLTDISMENVPMDTYPIHHGDPSSRTLKETQPWSSPRGSEGYLAATYPAVGQTSPRARKSMSLDMGQPSQANTKKLLGTRKSFDHLISDTKAPKRQEMESGITTPPKMRRVAETDYEMETQRISSSQQHPHLRKVSVSESNVLLDEEVLTDPKIQALLLTVLATLVKYTTDEFDQRILYEYLAEASVVFPKVFPLVHNLLDSKINTLLSLCQDPNLLNPIHGIVQSVVYHEESPPQYQTSYLQSFGFNGLWRFAGPFSKQTQIPDYAELIVKFLDALIDTYLPGIDEETSEESLLTPTSPYPPALQSQLSITANLNLSNSMTSLATSQHSPGIDKENVELSPTTGHCNSGRTRHGSASQVQKQRSAGSFKRNSIKKIV.

At alanine 2 the chain carries N-acetylalanine. A phosphoserine mark is found at serine 866 and serine 878. Residues 1253-1463 (HLLYQLLWNM…DLARRFFLDI (211 aa)) form the Ras-GAP domain. In terms of domain architecture, CRAL-TRIO spans 1561–1719 (EKEEFKALKT…ATLALEEDLK (159 aa)). The lipid binding stretch occupies residues 1561–1818 (EKEEFKALKT…RTRWELSQPD (258 aa)). A phosphoserine mark is found at serine 2169 and serine 2448. The disordered stretch occupies residues 2457-2482 (YPIHHGDPSSRTLKETQPWSSPRGSE). Positions 2458–2470 (PIHHGDPSSRTLK) are enriched in basic and acidic residues. Position 2495 is a phosphothreonine (threonine 2495). Phosphoserine occurs at positions 2496, 2502, 2504, and 2524. Residues 2536–2552 (KRQEMESGITTPPKMRR) carry the Bipartite nuclear localization signal motif. Threonine 2546 is modified (phosphothreonine). Residues serine 2578, serine 2783, and serine 2798 each carry the phosphoserine modification. A disordered region spans residues 2768–2820 (TSQHSPGIDKENVELSPTTGHCNSGRTRHGSASQVQKQRSAGSFKRNSIKKIV). The span at 2782-2808 (LSPTTGHCNSGRTRHGSASQVQKQRSA) shows a compositional bias: polar residues.

Interacts with HTR6. Interacts with SPRED2. In terms of processing, ubiquitinated by RNF7/RBX2, leading to its degradation.

Its subcellular location is the nucleus. It localises to the nucleolus. The protein resides in the cell membrane. In terms of biological role, stimulates the GTPase activity of Ras. NF1 shows greater affinity for Ras GAP, but lower specific activity. May be a regulator of Ras activity. In Rattus norvegicus (Rat), this protein is Neurofibromin (Nf1).